Here is a 521-residue protein sequence, read N- to C-terminus: Bacillolysin (521 aa).

The N-terminal stretch at 1–27 (MGLGKKLSVAVAASFMSLTISLPGVQA) is a signal peptide. The propeptide at 28–221 (AENPQLKENL…ILKKQNKVEH (194 aa)) is activation peptide. The Ca(2+) site is built by glutamine 283 and aspartate 360. Zn(2+) is bound at residue histidine 364. Glutamate 365 is an active-site residue. 2 residues coordinate Zn(2+): histidine 368 and glutamate 388. Ca(2+) is bound by residues aspartate 399, aspartate 402, aspartate 404, glutamate 407, and valine 411. Histidine 449 functions as the Proton donor in the catalytic mechanism.

Belongs to the peptidase M4 family. It depends on Ca(2+) as a cofactor. Requires Zn(2+) as cofactor.

The protein resides in the secreted. The enzyme catalyses Similar, but not identical, to that of thermolysin.. Extracellular zinc metalloprotease. This chain is Bacillolysin (npr), found in Bacillus amyloliquefaciens (Bacillus velezensis).